The chain runs to 817 residues: Disks large homolog 3 (817 aa).

Met1 and His2 each carry N-acetylmethionine. The disordered stretch occupies residues Trp33–Ser101. Over residues Gly40–Gly53 the composition is skewed to gly residues. The span at Gln57–Pro69 shows a compositional bias: polar residues. PDZ domains follow at residues Glu130–Arg217, Glu226–Lys311, and Asp379–Tyr465. Ser139 bears the Phosphoserine mark. One can recognise an SH3 domain in the interval Lys501–Glu571. In terms of domain architecture, Guanylate kinase-like spans Ala627–Glu802. Tyr673 carries the post-translational modification Phosphotyrosine.

Belongs to the MAGUK family. As to quaternary structure, interacts through its PDZ domains with NETO1, GRIN2B and SYNGAP1. Interacts through its guanylate kinase-like domain with DLGAP1, DLGAP2, DLGAP3 and DLGAP4. Interacts with FLTP/C1orf192. Interacts through its PDZ domains with APC. Interacts through its first two PDZ domains with ERBB4. Interacts through its third PDZ domain with NLGN1, and probably with NLGN2 and NLGN3. Interacts with FRMPD4 (via C-terminus). Interacts with LRFN1, LRFN2 and LRFN4. Interacts with DGKI (via PDZ-binding motif).

Its function is as follows. Required for learning most likely through its role in synaptic plasticity following NMDA receptor signaling. This Homo sapiens (Human) protein is Disks large homolog 3 (DLG3).